Here is an 86-residue protein sequence, read N- to C-terminus: Putative pro-MCH-like protein 1 (86 aa).

Positions 31–49 are NGE-like; that stretch reads GSVAFPAENGVQDTESTQE. The interval 38 to 62 is disordered; sequence ENGVQDTESTQEKRETGDEENSAKF. Residues 52 to 64 form an NEI-like region; the sequence is ETGDEENSAKFPV. The interval 68–86 is melanin-concentrating hormone-like; that stretch reads DFDTLSCMLGRVYQSCWQV.

The protein belongs to the melanin-concentrating hormone family. Expressed in testis and brain.

This is Putative pro-MCH-like protein 1 (PMCHL1) from Homo sapiens (Human).